The chain runs to 330 residues: Small ribosomal subunit protein uS2 (330 aa).

This sequence belongs to the universal ribosomal protein uS2 family.

This chain is Small ribosomal subunit protein uS2, found in Rhodopseudomonas palustris (strain BisA53).